Here is a 914-residue protein sequence, read N- to C-terminus: Isoleucine--tRNA ligase (914 aa).

The short motif at 64 to 74 is the 'HIGH' region element; it reads PYANGNFHLGH. E557 lines the L-isoleucyl-5'-AMP pocket. Residues 598-602 carry the 'KMSKS' region motif; the sequence is PMSKS. K601 contributes to the ATP binding site. 4 residues coordinate Zn(2+): C889, C892, C906, and C909.

This sequence belongs to the class-I aminoacyl-tRNA synthetase family. IleS type 1 subfamily. As to quaternary structure, monomer. Requires Zn(2+) as cofactor.

Its subcellular location is the cytoplasm. It catalyses the reaction tRNA(Ile) + L-isoleucine + ATP = L-isoleucyl-tRNA(Ile) + AMP + diphosphate. Catalyzes the attachment of isoleucine to tRNA(Ile). As IleRS can inadvertently accommodate and process structurally similar amino acids such as valine, to avoid such errors it has two additional distinct tRNA(Ile)-dependent editing activities. One activity is designated as 'pretransfer' editing and involves the hydrolysis of activated Val-AMP. The other activity is designated 'posttransfer' editing and involves deacylation of mischarged Val-tRNA(Ile). This Leptospira interrogans serogroup Icterohaemorrhagiae serovar Lai (strain 56601) protein is Isoleucine--tRNA ligase.